Reading from the N-terminus, the 299-residue chain is MAEFPASLLILNGKSTDNLPLREAIMLLREEGMTIHVRVTWEKGDAARYVEEARKFGVATVIAGGGDGTINEVSTALIQCEGDDIPALGILPLGTANDFATSVGIPEALDKALKLAIAGDAIAIDMAQVNKQTCFINMATGGFGTRITTETPEKLKAALGSVSYIIHGLMRMDTLQPDRCEIRGENFHWQGDALVIGIGNGRQAGGGQQLCPNALINDGLLQLRIFTGDEILPALVSTLKSDEDNPNIIEGASSWFDIQAPHDITFNLDGEPLSGQNFHIEILPAALRCRLPPDCPLLR.

In terms of domain architecture, DAGKc spans 2 to 133 (AEFPASLLIL…IDMAQVNKQT (132 aa)). Residues threonine 40, 66-72 (GDGTINE), and threonine 95 contribute to the ATP site. Residues leucine 215, aspartate 218, and leucine 220 each coordinate Mg(2+). Catalysis depends on glutamate 271, which acts as the Proton acceptor.

The protein belongs to the diacylglycerol/lipid kinase family. YegS lipid kinase subfamily. It depends on Mg(2+) as a cofactor. Requires Ca(2+) as cofactor.

It localises to the cytoplasm. Its function is as follows. Probably phosphorylates lipids; the in vivo substrate is unknown. The protein is Probable lipid kinase YegS of Escherichia coli (strain K12 / MC4100 / BW2952).